The following is a 347-amino-acid chain: DNA-directed RNA polymerase subunit alpha (347 aa).

The tract at residues 1 to 226 (MLISQRPTLS…ELFGLARELN (226 aa)) is alpha N-terminal domain (alpha-NTD). The tract at residues 241 to 347 (ADHIASFALP…DQDYAETEQL (107 aa)) is alpha C-terminal domain (alpha-CTD).

This sequence belongs to the RNA polymerase alpha chain family. In terms of assembly, homodimer. The RNAP catalytic core consists of 2 alpha, 1 beta, 1 beta' and 1 omega subunit. When a sigma factor is associated with the core the holoenzyme is formed, which can initiate transcription.

The enzyme catalyses RNA(n) + a ribonucleoside 5'-triphosphate = RNA(n+1) + diphosphate. DNA-dependent RNA polymerase catalyzes the transcription of DNA into RNA using the four ribonucleoside triphosphates as substrates. This Mycobacterium avium (strain 104) protein is DNA-directed RNA polymerase subunit alpha.